The primary structure comprises 468 residues: MSKGTLFDKVWDLHTVATLPSGQTQLFIGLHLIHEVTSPQAFAMLKERGLKVLFPERTIATVDHIVPTDNQARPFADSLAEEMMQALETNCQEHGIRFYNIGSGSQGIVHVIAPELGLTQPGMTIACGDSHTSTHGAFGAIAFGIGTSQVRDVLASQTLSLSKLKVRKIEVNGSLQPGVYAKDVILHIIRTLGVKAGVGYAYEYAGTTFEQMSMEERMTVCNMAIEGGARCGYVNPDAVTFAYLKEREFAPQTDWDTAQQWWQSIASDPDAVYDDVVVFDAADIAPTVTWGITPGQGIAVDQPLPLPEQLPASEQAIAEEAYQYMDLIPGQKLLGTKIDVCFIGSCTNGRISDLRAAAEIAQGRRVVPGLKAFVVPGSERVKQQAEAEGLDQIFQAAGFEWREPGCSMCLAMNPDKLQGRQISASSSNRNFKGRQGSATGRTLLMSPAMVAAAAVTGEVTDVRELLGQ.

Residues C346, C406, and C409 each contribute to the [4Fe-4S] cluster site.

It belongs to the aconitase/IPM isomerase family. LeuC type 1 subfamily. Heterodimer of LeuC and LeuD. It depends on [4Fe-4S] cluster as a cofactor.

It carries out the reaction (2R,3S)-3-isopropylmalate = (2S)-2-isopropylmalate. Its pathway is amino-acid biosynthesis; L-leucine biosynthesis; L-leucine from 3-methyl-2-oxobutanoate: step 2/4. Functionally, catalyzes the isomerization between 2-isopropylmalate and 3-isopropylmalate, via the formation of 2-isopropylmaleate. The sequence is that of 3-isopropylmalate dehydratase large subunit from Cyanothece sp. (strain PCC 7425 / ATCC 29141).